We begin with the raw amino-acid sequence, 245 residues long: 1-(5-phosphoribosyl)-5-[(5-phosphoribosylamino)methylideneamino] imidazole-4-carboxamide isomerase (245 aa).

Aspartate 10 functions as the Proton acceptor in the catalytic mechanism. The active-site Proton donor is the aspartate 129.

The protein belongs to the HisA/HisF family.

The protein localises to the cytoplasm. It catalyses the reaction 1-(5-phospho-beta-D-ribosyl)-5-[(5-phospho-beta-D-ribosylamino)methylideneamino]imidazole-4-carboxamide = 5-[(5-phospho-1-deoxy-D-ribulos-1-ylimino)methylamino]-1-(5-phospho-beta-D-ribosyl)imidazole-4-carboxamide. The protein operates within amino-acid biosynthesis; L-histidine biosynthesis; L-histidine from 5-phospho-alpha-D-ribose 1-diphosphate: step 4/9. The chain is 1-(5-phosphoribosyl)-5-[(5-phosphoribosylamino)methylideneamino] imidazole-4-carboxamide isomerase from Parafrankia sp. (strain EAN1pec).